The following is a 417-amino-acid chain: Mast cell carboxypeptidase A (417 aa).

The first 15 residues, 1–15, serve as a signal peptide directing secretion; it reads MRFFLLMAVIYTTLA. The propeptide at 16-109 is activation peptide; that stretch reads IAPVHFDREK…IEKQFDVKDE (94 aa). One can recognise a Peptidase M14 domain in the interval 118–412; sequence KYNDWDKIVS…LSVKFIAKYI (295 aa). Cystine bridges form between cysteine 173-cysteine 186 and cysteine 245-cysteine 268. Zn(2+) is bound by residues histidine 176 and glutamate 179. Histidine 304 contributes to the Zn(2+) binding site. Glutamate 378 (proton donor/acceptor) is an active-site residue.

The protein belongs to the peptidase M14 family. Requires Zn(2+) as cofactor.

The protein localises to the cytoplasmic vesicle. It is found in the secretory vesicle. It catalyses the reaction Release of a C-terminal amino acid, but little or no action with -Asp, -Glu, -Arg, -Lys or -Pro.. In Mus musculus (Mouse), this protein is Mast cell carboxypeptidase A (Cpa3).